Reading from the N-terminus, the 288-residue chain is Male determiner protein Nix (288 aa).

3 consecutive RRM domains span residues Tyr19–Ser94, Ile108–Arg179, and Arg205–Glu282.

Its function is as follows. Male determiner protein (M-factor) that controls male somatic sexual differentiation. Acts as a dominant factor that regulates the mRNA splicing of doublesex (dsx) or fruitless (fru) transcripts and promotes expression of male splice forms of dsx and fru. This Aedes aegypti (Yellowfever mosquito) protein is Male determiner protein Nix.